Reading from the N-terminus, the 1597-residue chain is Pentafunctional AROM polypeptide (1597 aa).

The segment at Met1–Asn384 is 3-dehydroquinate synthase. NAD(+) is bound by residues Asp44–Asn46, Glu81–Lys84, Gly114–Val116, and Asp119. 7-phospho-2-dehydro-3-deoxy-D-arabino-heptonate is bound at residue Arg130. Thr139–Thr140 lines the NAD(+) pocket. Residues Asp146 and Lys152 each coordinate 7-phospho-2-dehydro-3-deoxy-D-arabino-heptonate. Lys161 is a binding site for NAD(+). Asn162 contributes to the 7-phospho-2-dehydro-3-deoxy-D-arabino-heptonate binding site. Residues Phe179–Thr182 and Asn190 contribute to the NAD(+) site. Position 194 (Glu194) interacts with Zn(2+). Residues Glu194–Lys197 and Lys250 contribute to the 7-phospho-2-dehydro-3-deoxy-D-arabino-heptonate site. The active-site Proton acceptor; for 3-dehydroquinate synthase activity is Glu260. 7-phospho-2-dehydro-3-deoxy-D-arabino-heptonate-binding positions include Arg264–Asn268 and His271. His271 lines the Zn(2+) pocket. His275 acts as the Proton acceptor; for 3-dehydroquinate synthase activity in catalysis. The 7-phospho-2-dehydro-3-deoxy-D-arabino-heptonate site is built by His287 and Lys356. His287 contacts Zn(2+). Residues Val397–Val842 form an EPSP synthase region. Catalysis depends on Cys824, which acts as the For EPSP synthase activity. Positions Ala866–Ser1057 are shikimate kinase. ATP is bound at residue Gly872–Thr879. The segment at Leu1058–Glu1278 is 3-dehydroquinase. His1181 functions as the Proton acceptor; for 3-dehydroquinate dehydratase activity in the catalytic mechanism. Lys1209 serves as the catalytic Schiff-base intermediate with substrate; for 3-dehydroquinate dehydratase activity. A shikimate dehydrogenase region spans residues Ser1291–Thr1597.

It in the N-terminal section; belongs to the sugar phosphate cyclases superfamily. Dehydroquinate synthase family. This sequence in the 2nd section; belongs to the EPSP synthase family. The protein in the 3rd section; belongs to the shikimate kinase family. In the 4th section; belongs to the type-I 3-dehydroquinase family. It in the C-terminal section; belongs to the shikimate dehydrogenase family. In terms of assembly, homodimer. Zn(2+) is required as a cofactor.

The protein resides in the cytoplasm. The catalysed reaction is 7-phospho-2-dehydro-3-deoxy-D-arabino-heptonate = 3-dehydroquinate + phosphate. The enzyme catalyses 3-dehydroquinate = 3-dehydroshikimate + H2O. It carries out the reaction shikimate + NADP(+) = 3-dehydroshikimate + NADPH + H(+). It catalyses the reaction shikimate + ATP = 3-phosphoshikimate + ADP + H(+). The catalysed reaction is 3-phosphoshikimate + phosphoenolpyruvate = 5-O-(1-carboxyvinyl)-3-phosphoshikimate + phosphate. The protein operates within metabolic intermediate biosynthesis; chorismate biosynthesis; chorismate from D-erythrose 4-phosphate and phosphoenolpyruvate: step 2/7. Its pathway is metabolic intermediate biosynthesis; chorismate biosynthesis; chorismate from D-erythrose 4-phosphate and phosphoenolpyruvate: step 3/7. It functions in the pathway metabolic intermediate biosynthesis; chorismate biosynthesis; chorismate from D-erythrose 4-phosphate and phosphoenolpyruvate: step 4/7. It participates in metabolic intermediate biosynthesis; chorismate biosynthesis; chorismate from D-erythrose 4-phosphate and phosphoenolpyruvate: step 5/7. The protein operates within metabolic intermediate biosynthesis; chorismate biosynthesis; chorismate from D-erythrose 4-phosphate and phosphoenolpyruvate: step 6/7. Functionally, the AROM polypeptide catalyzes 5 consecutive enzymatic reactions in prechorismate polyaromatic amino acid biosynthesis. The chain is Pentafunctional AROM polypeptide from Blastomyces gilchristii (strain SLH14081) (Blastomyces dermatitidis).